The following is a 436-amino-acid chain: Proteasome-activating nucleotidase (436 aa).

A coiled-coil region spans residues 15–97 (EELCRLYRSL…LKSESEQLRS (83 aa)). ATP is bound by residues 222–227 (GTGKTL) and H361. A docks into pockets in the proteasome alpha-ring to cause gate opening region spans residues 434–436 (MFA).

Belongs to the AAA ATPase family. In terms of assembly, homohexamer. The hexameric complex has a two-ring architecture resembling a top hat that caps the 20S proteasome core at one or both ends. Upon ATP-binding, the C-terminus of PAN interacts with the alpha-rings of the proteasome core by binding to the intersubunit pockets.

Its subcellular location is the cytoplasm. ATPase which is responsible for recognizing, binding, unfolding and translocation of substrate proteins into the archaeal 20S proteasome core particle. Is essential for opening the gate of the 20S proteasome via an interaction with its C-terminus, thereby allowing substrate entry and access to the site of proteolysis. Thus, the C-termini of the proteasomal ATPase function like a 'key in a lock' to induce gate opening and therefore regulate proteolysis. Unfolding activity requires energy from ATP hydrolysis, whereas ATP binding alone promotes ATPase-20S proteasome association which triggers gate opening, and supports translocation of unfolded substrates. This Methanoregula boonei (strain DSM 21154 / JCM 14090 / 6A8) protein is Proteasome-activating nucleotidase.